The sequence spans 607 residues: NAD-dependent malic enzyme 2, mitochondrial (607 aa).

Residues 1–32 constitute a mitochondrion transit peptide; it reads MMWKNIAGLSKAAAAARTHGSRRCFSTAIPGP. Tyr136 acts as the Proton donor in catalysis. Residue Arg189 participates in NAD(+) binding. The active-site Proton acceptor is Lys207. Residues Glu278, Asp279, and Asp302 each contribute to the a divalent metal cation site. 2 residues coordinate NAD(+): Asp302 and Asn449.

This sequence belongs to the malic enzymes family. In terms of assembly, homodimer. Heterodimer of two related subunits in NAD-MEH complex. Interacts with NAD-ME1. Mg(2+) is required as a cofactor. The cofactor is Mn(2+). In terms of tissue distribution, expressed in leaves, stems, flowers, and roots (at protein level). Present in pollen.

It is found in the mitochondrion. The enzyme catalyses (S)-malate + NAD(+) = pyruvate + CO2 + NADH. With respect to regulation, activated by 2-ketoglutarate, phosphoenolpyruvate (PEP), fructose 1,6-biphosphate (FBP) and coenzyme A (acetyl-CoA and CoA) as homodimer and by oxaloacetate (OAA), 2-ketoglutarate, succinate, fumarate and CoA as heterodimer NAD-MEH. Repressed by succinate and fumarate as homodimer, in the presence of NAD(+) and competitively toward the substrate L-malate. Involved in the regulation of sugars and amino acids metabolisms during the night period. In Arabidopsis thaliana (Mouse-ear cress), this protein is NAD-dependent malic enzyme 2, mitochondrial (NAD-ME2).